A 107-amino-acid chain; its full sequence is RNA polymerase II transcriptional coactivator KIWI (107 aa).

The tract at residues 1-40 (MSSRGKRKDEDVRASDDESETHAPAKKVAKPADDSDQSDD) is disordered. Over residues 7 to 23 (RKDEDVRASDDESETHA) the composition is skewed to basic and acidic residues.

The protein belongs to the transcriptional coactivator PC4 family.

The protein localises to the nucleus. Its function is as follows. General coactivator that functions cooperatively with TAFs and mediates functional interactions between upstream activators and the general transcriptional machinery. Binds single-stranded DNA. This Arabidopsis thaliana (Mouse-ear cress) protein is RNA polymerase II transcriptional coactivator KIWI (KIWI).